Here is a 377-residue protein sequence, read N- to C-terminus: Flagellar P-ring protein (377 aa).

The signal sequence occupies residues M1–A33.

The protein belongs to the FlgI family. In terms of assembly, the basal body constitutes a major portion of the flagellar organelle and consists of four rings (L,P,S, and M) mounted on a central rod.

It is found in the periplasm. Its subcellular location is the bacterial flagellum basal body. In terms of biological role, assembles around the rod to form the L-ring and probably protects the motor/basal body from shearing forces during rotation. The protein is Flagellar P-ring protein of Nitrosospira multiformis (strain ATCC 25196 / NCIMB 11849 / C 71).